The sequence spans 154 residues: Myoglobin (154 aa).

The 147-residue stretch at 2-148 folds into the Globin domain; the sequence is GLSDGEWQLV…FRNDMAAKYK (147 aa). Ser4 carries the phosphoserine modification. Nitrite is bound at residue His65. His65 is a binding site for O2. Phosphothreonine is present on Thr68. Residue His94 coordinates heme b.

This sequence belongs to the globin family. In terms of assembly, monomeric.

The protein localises to the cytoplasm. Its subcellular location is the sarcoplasm. It catalyses the reaction Fe(III)-heme b-[protein] + nitric oxide + H2O = Fe(II)-heme b-[protein] + nitrite + 2 H(+). The catalysed reaction is H2O2 + AH2 = A + 2 H2O. In terms of biological role, monomeric heme protein which primary function is to store oxygen and facilitate its diffusion within muscle tissues. Reversibly binds oxygen through a pentacoordinated heme iron and enables its timely and efficient release as needed during periods of heightened demand. Depending on the oxidative conditions of tissues and cells, and in addition to its ability to bind oxygen, it also has a nitrite reductase activity whereby it regulates the production of bioactive nitric oxide. Under stress conditions, like hypoxia and anoxia, it also protects cells against reactive oxygen species thanks to its pseudoperoxidase activity. The sequence is that of Myoglobin (MB) from Callithrix jacchus (White-tufted-ear marmoset).